The sequence spans 87 residues: Small ribosomal subunit protein uS15 (87 aa).

Positions 1-19 (MEKARKEQLIREYATHEGD) are enriched in basic and acidic residues. The interval 1 to 22 (MEKARKEQLIREYATHEGDTGS) is disordered.

It belongs to the universal ribosomal protein uS15 family. As to quaternary structure, part of the 30S ribosomal subunit. Forms a bridge to the 50S subunit in the 70S ribosome, contacting the 23S rRNA.

In terms of biological role, one of the primary rRNA binding proteins, it binds directly to 16S rRNA where it helps nucleate assembly of the platform of the 30S subunit by binding and bridging several RNA helices of the 16S rRNA. Its function is as follows. Forms an intersubunit bridge (bridge B4) with the 23S rRNA of the 50S subunit in the ribosome. In Clostridium novyi (strain NT), this protein is Small ribosomal subunit protein uS15.